Consider the following 215-residue polypeptide: Adenylate kinase (215 aa).

10–15 (GAGKGT) contributes to the ATP binding site. Residues 30–59 (STGDMFRAAMKNNTELGKKAKSFMDNGDLV) are NMP. Residues T31, R36, 57 to 59 (DLV), 85 to 88 (GFPR), and Q92 contribute to the AMP site. The LID stretch occupies residues 126–163 (GRWICRTCGKTYHEIYNPPKVPGKCDLDGGELYQRDDD). ATP is bound at residue R127. Zn(2+) contacts are provided by C130 and C133. 136-137 (TY) is an ATP binding site. 2 residues coordinate Zn(2+): C150 and D153. 2 residues coordinate AMP: R160 and R171. Q199 contributes to the ATP binding site.

It belongs to the adenylate kinase family. In terms of assembly, monomer.

It is found in the cytoplasm. The enzyme catalyses AMP + ATP = 2 ADP. It functions in the pathway purine metabolism; AMP biosynthesis via salvage pathway; AMP from ADP: step 1/1. Catalyzes the reversible transfer of the terminal phosphate group between ATP and AMP. Plays an important role in cellular energy homeostasis and in adenine nucleotide metabolism. The protein is Adenylate kinase of Listeria monocytogenes serotype 4b (strain CLIP80459).